The following is a 123-amino-acid chain: Large ribosomal subunit protein bL12 (123 aa).

It belongs to the bacterial ribosomal protein bL12 family. As to quaternary structure, homodimer. Part of the ribosomal stalk of the 50S ribosomal subunit. Forms a multimeric L10(L12)X complex, where L10 forms an elongated spine to which 2 to 4 L12 dimers bind in a sequential fashion. Binds GTP-bound translation factors.

Forms part of the ribosomal stalk which helps the ribosome interact with GTP-bound translation factors. Is thus essential for accurate translation. The chain is Large ribosomal subunit protein bL12 from Cytophaga hutchinsonii (strain ATCC 33406 / DSM 1761 / CIP 103989 / NBRC 15051 / NCIMB 9469 / D465).